A 225-amino-acid chain; its full sequence is NAD(P)H-quinone oxidoreductase subunit K, chloroplastic (225 aa).

The [4Fe-4S] cluster site is built by C43, C44, C108, and C139.

Belongs to the complex I 20 kDa subunit family. In terms of assembly, NDH is composed of at least 16 different subunits, 5 of which are encoded in the nucleus. It depends on [4Fe-4S] cluster as a cofactor.

The protein resides in the plastid. Its subcellular location is the chloroplast thylakoid membrane. The enzyme catalyses a plastoquinone + NADH + (n+1) H(+)(in) = a plastoquinol + NAD(+) + n H(+)(out). The catalysed reaction is a plastoquinone + NADPH + (n+1) H(+)(in) = a plastoquinol + NADP(+) + n H(+)(out). Functionally, NDH shuttles electrons from NAD(P)H:plastoquinone, via FMN and iron-sulfur (Fe-S) centers, to quinones in the photosynthetic chain and possibly in a chloroplast respiratory chain. The immediate electron acceptor for the enzyme in this species is believed to be plastoquinone. Couples the redox reaction to proton translocation, and thus conserves the redox energy in a proton gradient. The sequence is that of NAD(P)H-quinone oxidoreductase subunit K, chloroplastic from Nuphar advena (Common spatterdock).